The primary structure comprises 235 residues: Post-translational flagellin modification protein B (235 aa).

This sequence belongs to the CMP-NeuNAc synthase family.

Functionally, required for biosynthesis of LAH modification in the post-translational modification of Campylobacter coli flagellin. The sequence is that of Post-translational flagellin modification protein B (ptmB) from Campylobacter coli.